Consider the following 183-residue polypeptide: uncharacterized protein (183 aa).

A disordered region spans residues 54–89 (DAASQSDPLPGGDGLTGGDSKATRRTSPRYYPPSEA).

This is an uncharacterized protein from Human cytomegalovirus (strain AD169) (HHV-5).